We begin with the raw amino-acid sequence, 694 residues long: Polyphosphate kinase (694 aa).

Asparagine 45 contacts ATP. Mg(2+) contacts are provided by arginine 367 and arginine 397. The active-site Phosphohistidine intermediate is histidine 427. Residues tyrosine 460, arginine 553, and histidine 580 each contribute to the ATP site.

It belongs to the polyphosphate kinase 1 (PPK1) family. The cofactor is Mg(2+). In terms of processing, an intermediate of this reaction is the autophosphorylated ppk in which a phosphate is covalently linked to a histidine residue through a N-P bond.

The catalysed reaction is [phosphate](n) + ATP = [phosphate](n+1) + ADP. In terms of biological role, catalyzes the reversible transfer of the terminal phosphate of ATP to form a long-chain polyphosphate (polyP). The protein is Polyphosphate kinase of Campylobacter jejuni subsp. doylei (strain ATCC BAA-1458 / RM4099 / 269.97).